Here is a 104-residue protein sequence, read N- to C-terminus: MYAIIKNGGKQYKVKEGEVVKLEKFDLGIGEKVEFDTVLMGQTAEGEVKIGAPIVEGAKVVGEVVEQGRNKKVKIMKFRRRKHSMKQQGHRQYFTAVKVSSISL.

This sequence belongs to the bacterial ribosomal protein bL21 family. As to quaternary structure, part of the 50S ribosomal subunit. Contacts protein L20.

This protein binds to 23S rRNA in the presence of protein L20. The chain is Large ribosomal subunit protein bL21 from Francisella philomiragia subsp. philomiragia (strain ATCC 25017 / CCUG 19701 / FSC 153 / O#319-036).